The chain runs to 397 residues: uncharacterized protein (397 aa).

The next 4 helical transmembrane spans lie at Leu-255–Ala-275, Met-284–Ala-304, Leu-308–Leu-328, and Val-370–Gly-390.

It is found in the cell membrane. This is an uncharacterized protein from Methanocaldococcus jannaschii (strain ATCC 43067 / DSM 2661 / JAL-1 / JCM 10045 / NBRC 100440) (Methanococcus jannaschii).